The sequence spans 258 residues: uncharacterized protein (258 aa).

This sequence belongs to the IIV-6 219L family.

This is an uncharacterized protein from Aedes vexans (Inland floodwater mosquito).